Here is a 174-residue protein sequence, read N- to C-terminus: RNA pyrophosphohydrolase (174 aa).

One can recognise a Nudix hydrolase domain in the interval 6–149 (GFRANVGIVI…KREVYRRAMK (144 aa)). Positions 38-59 (GGIDEGETAEQTMYRELYEEVG) match the Nudix box motif.

The protein belongs to the Nudix hydrolase family. RppH subfamily. A divalent metal cation serves as cofactor.

Accelerates the degradation of transcripts by removing pyrophosphate from the 5'-end of triphosphorylated RNA, leading to a more labile monophosphorylated state that can stimulate subsequent ribonuclease cleavage. In Pseudoalteromonas atlantica (strain T6c / ATCC BAA-1087), this protein is RNA pyrophosphohydrolase.